Consider the following 121-residue polypeptide: Small ribosomal subunit protein uS13 (121 aa).

Residues 95–121 are disordered; it reads LPVRGQNTKNNARTRKGKAVAIAGKKK. Over residues 106–121 the composition is skewed to basic residues; the sequence is ARTRKGKAVAIAGKKK.

The protein belongs to the universal ribosomal protein uS13 family. Part of the 30S ribosomal subunit. Forms a loose heterodimer with protein S19. Forms two bridges to the 50S subunit in the 70S ribosome.

Located at the top of the head of the 30S subunit, it contacts several helices of the 16S rRNA. In the 70S ribosome it contacts the 23S rRNA (bridge B1a) and protein L5 of the 50S subunit (bridge B1b), connecting the 2 subunits; these bridges are implicated in subunit movement. Contacts the tRNAs in the A and P-sites. In Streptococcus thermophilus (strain CNRZ 1066), this protein is Small ribosomal subunit protein uS13.